Reading from the N-terminus, the 614-residue chain is Nuclear receptor subfamily 1 group D member 1 (614 aa).

Polar residues predominate over residues 1-12 (MTTLDSNNNTGG). The interval 1 to 70 (MTTLDSNNNT…TQDPARSFGS (70 aa)) is required for phosphorylation by CSNK1E and cytoplasmic localization. Positions 1–119 (MTTLDSNNNT…SSRVSPSKST (119 aa)) are disordered. Residues 1–128 (MTTLDSNNNT…TSNITKLNGM (128 aa)) are modulating. Residues 14 to 34 (ITYIGSSGSSPSRTSPESLYS) show a composition bias toward low complexity. Positions 35–48 (DNSNGSFQSLTQGC) are enriched in polar residues. Residues 49–284 (PTYFPPSPTG…PPRSPSPEPT (236 aa)) are crucial for activation of GJA1. Phosphoserine; by GSK3-beta is present on residues serine 55 and serine 59. The span at 69–102 (GSIPPSLSDDGSPSSSSSSSSSSSSFYNGSPPGS) shows a compositional bias: low complexity. The segment at residues 129-205 (VLLCKVCGDV…VGMSRDAVRF (77 aa)) is a DNA-binding region (nuclear receptor). 2 consecutive NR C4-type zinc fingers follow at residues 132–152 (CKVCGDVASGFHYGVHACEGC) and 169–193 (CLKNENCSIVRINRNRCQQCRFKKC). Residues lysine 191 and lysine 192 each carry the N6-acetyllysine; by KAT5 modification. The segment covering 233–243 (SQCPLETSPTQ) has biased composition (polar residues). Disordered regions lie at residues 233–285 (SQCP…EPTV) and 311–345 (PGNFNANHASGSPPATTPHRWENQGCPPAPNDNNT). Over residues 244–261 (HPTPGPMGPSPPPAPVPS) the composition is skewed to pro residues. Phosphothreonine; by CDK1 is present on threonine 274. Positions 284–614 (TVEDVISQVA…KLLSFRVDAQ (331 aa)) constitute an NR LBD domain. The segment covering 311–324 (PGNFNANHASGSPP) has biased composition (polar residues). Lysine 400 is modified (N6-acetyllysine). Cysteine 418 is a binding site for heme. N6-acetyllysine is present on lysine 591. Residue histidine 602 participates in heme binding.

The protein belongs to the nuclear hormone receptor family. NR1 subfamily. In terms of assembly, binds DNA as a monomer or a homodimer. Interacts with C1D, NR2E3 and SP1. Interacts with OPHN1 (via C-terminus). Interacts with ZNHIT1. Interacts with PER2; the interaction associates PER2 to BMAL1 promoter region. Interacts with CRY1. Interacts with CCAR2. Interacts with SIAH2. Interacts with CDK1. Interacts with FBXW7. Interacts with HUWE1. Interacts with NR0B2. Interacts with NFIL3. Interacts (via domain NR LBD) with HSP90AA1 and HSP90AB1. Post-translationally, ubiquitinated, leading to its proteasomal degradation. Ubiquitinated by SIAH2; leading to its proteasomal degradation. Ubiquitinated by the SCF(FBXW7) complex when phosphorylated by CDK1 leading to its proteasomal degradation. Rapidly ubiquitinated in response to inflammatory triggers and sumoylation is a prerequisite to its ubiquitination. In terms of processing, sumoylated by UBE2I, desumoylated by SENP1, and sumoylation is a prerequisite to its ubiquitination. Phosphorylated by CSNK1E; phosphorylation enhances its cytoplasmic localization. Post-translationally, undergoes lysosome-mediated degradation in a time-dependent manner in the liver. In terms of tissue distribution, widely expressed. Expressed at high levels in the liver, adipose tissue, skeletal muscle and brain. Also expressed in endothelial cells (ECs), vascular smooth muscle cells (VSMCs) and macrophages. Expression oscillates diurnally in the suprachiasmatic nucleus (SCN) of the hypothalamus as well as in peripheral tissues. Expression increases during the differentiation of pre-adipocytes into mature adipocytes. Expressed at high levels in some squamous carcinoma cell lines.

It is found in the nucleus. Its subcellular location is the cytoplasm. The protein resides in the cell projection. The protein localises to the dendrite. It localises to the dendritic spine. In terms of biological role, transcriptional repressor which coordinates circadian rhythm and metabolic pathways in a heme-dependent manner. Integral component of the complex transcription machinery that governs circadian rhythmicity and forms a critical negative limb of the circadian clock by directly repressing the expression of core clock components BMAL1, CLOCK and CRY1. Also regulates genes involved in metabolic functions, including lipid and bile acid metabolism, adipogenesis, gluconeogenesis and the macrophage inflammatory response. Acts as a receptor for heme which stimulates its interaction with the NCOR1/HDAC3 corepressor complex, enhancing transcriptional repression. Recognizes two classes of DNA response elements within the promoter of its target genes and can bind to DNA as either monomers or homodimers, depending on the nature of the response element. Binds as a monomer to a response element composed of the consensus half-site motif 5'-[A/G]GGTCA-3' preceded by an A/T-rich 5' sequence (RevRE), or as a homodimer to a direct repeat of the core motif spaced by two nucleotides (RevDR-2). Acts as a potent competitive repressor of ROR alpha (RORA) function and regulates the levels of its ligand heme by repressing the expression of PPARGC1A, a potent inducer of heme synthesis. Regulates lipid metabolism by repressing the expression of APOC3 and by influencing the activity of sterol response element binding proteins (SREBPs); represses INSIG2 which interferes with the proteolytic activation of SREBPs which in turn govern the rhythmic expression of enzymes with key functions in sterol and fatty acid synthesis. Regulates gluconeogenesis via repression of G6PC1 and PEPCK and adipocyte differentiation via repression of PPARG. Regulates glucagon release in pancreatic alpha-cells via the AMPK-NAMPT-SIRT1 pathway and the proliferation, glucose-induced insulin secretion and expression of key lipogenic genes in pancreatic-beta cells. Positively regulates bile acid synthesis by increasing hepatic expression of CYP7A1 via repression of NR0B2 and NFIL3 which are negative regulators of CYP7A1. Modulates skeletal muscle oxidative capacity by regulating mitochondrial biogenesis and autophagy; controls mitochondrial biogenesis and respiration by interfering with the STK11-PRKAA1/2-SIRT1-PPARGC1A signaling pathway. Represses the expression of SERPINE1/PAI1, an important modulator of cardiovascular disease and the expression of inflammatory cytokines and chemokines in macrophages. Represses gene expression at a distance in macrophages by inhibiting the transcription of enhancer-derived RNAs (eRNAs). Plays a role in the circadian regulation of body temperature and negatively regulates thermogenic transcriptional programs in brown adipose tissue (BAT); imposes a circadian oscillation in BAT activity, increasing body temperature when awake and depressing thermogenesis during sleep. In concert with NR2E3, regulates transcriptional networks critical for photoreceptor development and function. In addition to its activity as a repressor, can also act as a transcriptional activator. In the ovarian granulosa cells acts as a transcriptional activator of STAR which plays a role in steroid biosynthesis. In collaboration with SP1, activates GJA1 transcription in a heme-independent manner. Represses the transcription of CYP2B10, CYP4A10 and CYP4A14. Represses the transcription of CES2. Represses and regulates the circadian expression of TSHB in a NCOR1-dependent manner. Negatively regulates the protein stability of NR3C1 and influences the time-dependent subcellular distribution of NR3C1, thereby affecting its transcriptional regulatory activity. Plays a critical role in the circadian control of neutrophilic inflammation in the lung; under resting, non-stress conditions, acts as a rhythmic repressor to limit inflammatory activity whereas in the presence of inflammatory triggers undergoes ubiquitin-mediated degradation thereby relieving inhibition of the inflammatory response. Plays a key role in the circadian regulation of microglial activation and neuroinflammation; suppresses microglial activation through the NF-kappaB pathway in the central nervous system. Plays a role in the regulation of the diurnal rhythms of lipid and protein metabolism in the skeletal muscle via transcriptional repression of genes controlling lipid and amino acid metabolism in the muscle. This chain is Nuclear receptor subfamily 1 group D member 1 (NR1D1), found in Homo sapiens (Human).